The following is a 703-amino-acid chain: Lactococcin-G-processing and transport ATP-binding protein LagD (703 aa).

Residues 7-132 enclose the Peptidase C39 domain; that stretch reads QQDEKDCGVA…KEWTGVLLFP (126 aa). Cys-13 is an active-site residue. An ABC transmembrane type-1 domain is found at 153-435; it reads PILIKQKSLF…IINLQVKMQK (283 aa). Helical transmembrane passes span 162–182, 189–209, 224–244, 267–287, 291–311, 381–401, and 409–429; these read FITI…DNII, TLNI…LFEY, MSIM…FFAT, ATLS…TLAI, QLFL…YVFI, MVIE…YVID, and LITY…IINL. The 235-residue stretch at 469 to 703 folds into the ABC transporter domain; that stretch reads IKLDKVSFSY…EGVYRRLLNA (235 aa). 502-509 lines the ATP pocket; sequence GVSGSGKS.

It belongs to the ABC transporter superfamily. LagD family. In terms of assembly, homodimer.

It localises to the cell membrane. In terms of biological role, lagD (TC 3.A.1) is involved in processing the signal peptide and probably also in export of the bacteriocin lactococcin G. This is Lactococcin-G-processing and transport ATP-binding protein LagD (lagD) from Lactococcus lactis subsp. lactis (Streptococcus lactis).